The chain runs to 443 residues: UDP-N-acetylmuramate--L-alanine ligase (443 aa).

ATP is bound at residue 110-116; that stretch reads GAHGKTS.

This sequence belongs to the MurCDEF family.

The protein localises to the cytoplasm. It catalyses the reaction UDP-N-acetyl-alpha-D-muramate + L-alanine + ATP = UDP-N-acetyl-alpha-D-muramoyl-L-alanine + ADP + phosphate + H(+). It functions in the pathway cell wall biogenesis; peptidoglycan biosynthesis. Cell wall formation. This Streptococcus equi subsp. zooepidemicus (strain H70) protein is UDP-N-acetylmuramate--L-alanine ligase.